The primary structure comprises 263 residues: Tryptophan synthase alpha chain (263 aa).

Active-site proton acceptor residues include glutamate 50 and aspartate 61.

Belongs to the TrpA family. In terms of assembly, tetramer of two alpha and two beta chains.

It catalyses the reaction (1S,2R)-1-C-(indol-3-yl)glycerol 3-phosphate + L-serine = D-glyceraldehyde 3-phosphate + L-tryptophan + H2O. Its pathway is amino-acid biosynthesis; L-tryptophan biosynthesis; L-tryptophan from chorismate: step 5/5. The alpha subunit is responsible for the aldol cleavage of indoleglycerol phosphate to indole and glyceraldehyde 3-phosphate. The polypeptide is Tryptophan synthase alpha chain (Clostridium acetobutylicum (strain ATCC 824 / DSM 792 / JCM 1419 / IAM 19013 / LMG 5710 / NBRC 13948 / NRRL B-527 / VKM B-1787 / 2291 / W)).